The primary structure comprises 360 residues: F420-dependent hydroxymycolic acid dehydrogenase (360 aa).

Residues 1 to 40 constitute a signal peptide (tat-type signal); the sequence is MTGISRRTFGLAAGFGAIGAGGLGGGCSTRSGPTPTPEPA. Coenzyme F420-(gamma-Glu)n is bound at residue aspartate 77. Histidine 78 acts as the Proton donor in catalysis. Coenzyme F420-(gamma-Glu)n is bound at residue 145 to 146; that stretch reads TG. Glutamate 147 functions as the Proton acceptor in the catalytic mechanism. Residues asparagine 150 and 213 to 214 each bind coenzyme F420-(gamma-Glu)n; that span reads SG.

It belongs to the F420-dependent hydroxymycolic acid dehydrogenase family. Homodimer. Is exported by the Tat system. The position of the signal peptide cleavage has not been experimentally proven. In terms of processing, may be lipidated.

The protein localises to the cell envelope. It functions in the pathway lipid metabolism; mycolic acid biosynthesis. Is inhibited by the anti-tuberculous drug PA-824, a bicyclic 4-nitroimidazole class compound. Therefore, this is consistent with the finding that PA-824 inhibits the formation of K-MAs and causes an accumulation of hydroxymycolic acids (H-MAs) in M.tuberculosis. Functionally, catalyzes the coenzyme F420-dependent oxidation of hydroxymycolic acids (H-MAs) to ketomycolic acids (K-MAs), a lipid class making up the mycobacterial pseudo-outer membrane and over one-third of the dry weight of M.tuberculosis. Does not exhibit F420-dependent glucose-6-phosphate dehydrogenase (FGD) activity. The sequence is that of F420-dependent hydroxymycolic acid dehydrogenase from Mycobacterium tuberculosis (strain ATCC 25618 / H37Rv).